The primary structure comprises 152 residues: Ribosome maturation factor RimP (152 aa).

This sequence belongs to the RimP family.

It is found in the cytoplasm. Functionally, required for maturation of 30S ribosomal subunits. The sequence is that of Ribosome maturation factor RimP from Aeromonas hydrophila subsp. hydrophila (strain ATCC 7966 / DSM 30187 / BCRC 13018 / CCUG 14551 / JCM 1027 / KCTC 2358 / NCIMB 9240 / NCTC 8049).